We begin with the raw amino-acid sequence, 287 residues long: 4-hydroxybenzoate octaprenyltransferase (287 aa).

9 helical membrane passes run 22–42 (IGTLLLLWPTLWALWIAAQGF), 45–65 (LGVLIVFSAGVFLMRSAGCVI), 91–111 (TSTEAIILFFILAIVSFLLVL), 114–134 (NSLTIQLSFAGLLLAFAYPFM), 139–159 (QLPQLVLGLAFSWSIPMAFAA), 161–181 (ANALPAVVWIIFAVNIIWTIA), 212–232 (IIIALLQLTSLILLSLLGWLE), 236–256 (WIYFIALLVVGGLFLRQQLQI), and 267–287 (AFLDNNYVGFVIFAGLFLGYL).

This sequence belongs to the UbiA prenyltransferase family. It depends on Mg(2+) as a cofactor.

It localises to the cell inner membrane. It carries out the reaction all-trans-octaprenyl diphosphate + 4-hydroxybenzoate = 4-hydroxy-3-(all-trans-octaprenyl)benzoate + diphosphate. The protein operates within cofactor biosynthesis; ubiquinone biosynthesis. Functionally, catalyzes the prenylation of para-hydroxybenzoate (PHB) with an all-trans polyprenyl group. Mediates the second step in the final reaction sequence of ubiquinone-8 (UQ-8) biosynthesis, which is the condensation of the polyisoprenoid side chain with PHB, generating the first membrane-bound Q intermediate 3-octaprenyl-4-hydroxybenzoate. This Psychromonas ingrahamii (strain DSM 17664 / CCUG 51855 / 37) protein is 4-hydroxybenzoate octaprenyltransferase.